The sequence spans 60 residues: uncharacterized protein (60 aa).

This is an uncharacterized protein from Acidianus convivator (ATV).